A 432-amino-acid chain; its full sequence is Transcriptional adapter 3 (432 aa).

A coiled-coil region spans residues Ile-40–Gln-69. Disordered stretches follow at residues Lys-88–Gln-127 and Ser-275–Ser-313. The span at Asp-293 to Pro-305 shows a compositional bias: polar residues. The stretch at Leu-367–Thr-407 forms a coiled coil.

This sequence belongs to the NGG1 family.

Its subcellular location is the nucleus. Functions as a component of the PCAF complex. The PCAF complex is capable of efficiently acetylating histones in a nucleosomal context. The protein is Transcriptional adapter 3 (tada3) of Xenopus tropicalis (Western clawed frog).